Here is a 185-residue protein sequence, read N- to C-terminus: uncharacterized protein (185 aa).

Transmembrane regions (helical) follow at residues 32-52, 66-86, and 155-175; these read LIFV…LLAF, LVTL…VLAV, and IGYG…FLVV.

Its subcellular location is the cell membrane. This is an uncharacterized protein from Bacillus subtilis (strain 168).